A 113-amino-acid polypeptide reads, in one-letter code: Hydrogenase maturation factor HypA (113 aa).

His-2 provides a ligand contact to Ni(2+). Zn(2+) contacts are provided by Cys-73, Cys-76, Cys-89, and Cys-92.

This sequence belongs to the HypA/HybF family.

In terms of biological role, involved in the maturation of [NiFe] hydrogenases. Required for nickel insertion into the metal center of the hydrogenase. In Aeromonas salmonicida (strain A449), this protein is Hydrogenase maturation factor HypA.